We begin with the raw amino-acid sequence, 310 residues long: HTH-type transcriptional activator TtdR (310 aa).

In terms of domain architecture, HTH lysR-type spans 6 to 63 (PLAKDLQVLVEIVHSGSFSAAAATLGQTPAFVTKRIQILENTLATTLLNRSARGVALT). A DNA-binding region (H-T-H motif) is located at residues 23–42 (FSAAAATLGQTPAFVTKRIQ).

The protein belongs to the LysR transcriptional regulatory family.

In terms of biological role, positive regulator required for L-tartrate-dependent anaerobic growth on glycerol. Induces expression of the ttdA-ttdB-ygjE operon. The sequence is that of HTH-type transcriptional activator TtdR (ttdR) from Escherichia coli O6:K15:H31 (strain 536 / UPEC).